A 172-amino-acid chain; its full sequence is 3-hydroxydecanoyl-[acyl-carrier-protein] dehydratase (172 aa).

The active site involves histidine 71.

It belongs to the thioester dehydratase family. FabA subfamily. As to quaternary structure, homodimer.

It localises to the cytoplasm. It carries out the reaction a (3R)-hydroxyacyl-[ACP] = a (2E)-enoyl-[ACP] + H2O. The enzyme catalyses (3R)-hydroxydecanoyl-[ACP] = (2E)-decenoyl-[ACP] + H2O. It catalyses the reaction (2E)-decenoyl-[ACP] = (3Z)-decenoyl-[ACP]. The protein operates within lipid metabolism; fatty acid biosynthesis. Its function is as follows. Necessary for the introduction of cis unsaturation into fatty acids. Catalyzes the dehydration of (3R)-3-hydroxydecanoyl-ACP to E-(2)-decenoyl-ACP and then its isomerization to Z-(3)-decenoyl-ACP. Can catalyze the dehydratase reaction for beta-hydroxyacyl-ACPs with saturated chain lengths up to 16:0, being most active on intermediate chain length. This Sodalis glossinidius (strain morsitans) protein is 3-hydroxydecanoyl-[acyl-carrier-protein] dehydratase.